The primary structure comprises 87 residues: DNA-directed RNA polymerase subunit omega (87 aa).

The protein belongs to the RNA polymerase subunit omega family. In terms of assembly, the RNAP catalytic core consists of 2 alpha, 1 beta, 1 beta' and 1 omega subunit. When a sigma factor is associated with the core the holoenzyme is formed, which can initiate transcription.

The catalysed reaction is RNA(n) + a ribonucleoside 5'-triphosphate = RNA(n+1) + diphosphate. In terms of biological role, promotes RNA polymerase assembly. Latches the N- and C-terminal regions of the beta' subunit thereby facilitating its interaction with the beta and alpha subunits. The polypeptide is DNA-directed RNA polymerase subunit omega (Acidothermus cellulolyticus (strain ATCC 43068 / DSM 8971 / 11B)).